We begin with the raw amino-acid sequence, 554 residues long: 3-(3-hydroxy-phenyl)propionate/3-hydroxycinnamic acid hydroxylase (554 aa).

FAD contacts are provided by residues 17-46 and 285-295; these read QVAI…VVEK and FRIDRVLLAGD.

Belongs to the PheA/TfdB FAD monooxygenase family. The cofactor is FAD.

The enzyme catalyses 3-(3-hydroxyphenyl)propanoate + NADH + O2 + H(+) = 3-(2,3-dihydroxyphenyl)propanoate + NAD(+) + H2O. It carries out the reaction (2E)-3-(3-hydroxyphenyl)prop-2-enoate + NADH + O2 + H(+) = (2E)-3-(2,3-dihydroxyphenyl)prop-2-enoate + NAD(+) + H2O. Its pathway is aromatic compound metabolism; 3-phenylpropanoate degradation. Catalyzes the insertion of one atom of molecular oxygen into position 2 of the phenyl ring of 3-(3-hydroxyphenyl)propionate (3-HPP) and hydroxycinnamic acid (3HCI). The chain is 3-(3-hydroxy-phenyl)propionate/3-hydroxycinnamic acid hydroxylase from Escherichia coli O139:H28 (strain E24377A / ETEC).